Consider the following 1772-residue polypeptide: Helicase SWR1 (1772 aa).

Disordered regions lie at residues 1–170 (MSKR…LTPL) and 282–402 (AVEE…PYDV). The span at 7–19 (DLATTHANGSVDS) shows a compositional bias: polar residues. Over residues 61-71 (RQATQQQQAPG) the composition is skewed to low complexity. Residues 107–121 (TPKKTPSRRNGRRRS) show a composition bias toward basic residues. 2 stretches are compositionally biased toward acidic residues: residues 126 to 163 (EVEE…EEAE) and 282 to 323 (AVEE…QEEE). Over residues 338-379 (AKGKSKTASKTSKSKSKASSKSKSKSKGKGQARASKLSKSRR) the composition is skewed to basic residues. The HSA domain maps to 536–609 (GFNDPERSTR…AKLLKTMARK (74 aa)). The interval 656–854 (LEARVRGDND…EKADTEVDRK (199 aa)) is disordered. Composition is skewed to acidic residues over residues 665–695 (DTPE…DDRE), 727–757 (AEEE…EETE), 770–800 (PAEE…DYEA), and 818–847 (EEDE…EEKA). Residues 921 to 1086 (AGLYNNDTNG…WSLLYFLMPS (166 aa)) form the Helicase ATP-binding domain. Residue 934-941 (DEMGLGKT) participates in ATP binding. The DEAH box motif lies at 1037-1040 (DEAH). Residues 1470 to 1623 (KLQRLATLLQ…NVVIQDGEFT (154 aa)) enclose the Helicase C-terminal domain. A disordered region spans residues 1681 to 1757 (TNLDVEDFDE…SDESDSGIGH (77 aa)). The span at 1740–1752 (GGDDDDSDSDESD) shows a compositional bias: acidic residues.

The protein belongs to the SNF2/RAD54 helicase family. SWR1 subfamily. In terms of assembly, component of the SWR1 chromatin-remodeling complex.

Its subcellular location is the nucleus. The catalysed reaction is ATP + H2O = ADP + phosphate + H(+). Functionally, catalytic component of the SWR1 complex which mediates the ATP-dependent exchange of histone H2A for the H2A variant HZT1 leading to transcriptional regulation of selected genes by chromatin remodeling. This is Helicase SWR1 (SWR1) from Yarrowia lipolytica (strain CLIB 122 / E 150) (Yeast).